Here is a 396-residue protein sequence, read N- to C-terminus: 1-deoxy-D-xylulose 5-phosphate reductoisomerase (396 aa).

The NADPH site is built by T10, G11, S12, I13, and N123. K124 serves as a coordination point for 1-deoxy-D-xylulose 5-phosphate. Position 125 (E125) interacts with NADPH. D149 lines the Mn(2+) pocket. 4 residues coordinate 1-deoxy-D-xylulose 5-phosphate: S150, E151, S185, and H208. E151 contacts Mn(2+). G214 provides a ligand contact to NADPH. 1-deoxy-D-xylulose 5-phosphate-binding residues include S221, N226, K227, and E230. Position 230 (E230) interacts with Mn(2+).

Belongs to the DXR family. The cofactor is Mg(2+). Mn(2+) is required as a cofactor.

It carries out the reaction 2-C-methyl-D-erythritol 4-phosphate + NADP(+) = 1-deoxy-D-xylulose 5-phosphate + NADPH + H(+). It functions in the pathway isoprenoid biosynthesis; isopentenyl diphosphate biosynthesis via DXP pathway; isopentenyl diphosphate from 1-deoxy-D-xylulose 5-phosphate: step 1/6. In terms of biological role, catalyzes the NADPH-dependent rearrangement and reduction of 1-deoxy-D-xylulose-5-phosphate (DXP) to 2-C-methyl-D-erythritol 4-phosphate (MEP). This Shewanella sp. (strain ANA-3) protein is 1-deoxy-D-xylulose 5-phosphate reductoisomerase.